Here is a 497-residue protein sequence, read N- to C-terminus: uncharacterized protein (497 aa).

A compositionally biased stretch (polar residues) spans 1–16; it reads MSTTTETVTWSQYKPQ. Positions 1 to 29 are disordered; that stretch reads MSTTTETVTWSQYKPQETQRRLSRSSTIT. The residue at position 64 (Ser64) is a Phosphoserine. A run of 6 helical transmembrane segments spans residues 86–106, 120–140, 155–175, 180–200, 222–242, and 258–278; these read IALV…ALPI, FSGL…YPML, FRPL…YSLA, WLYL…MFLY, LNIL…GILA, and AGSW…SIFF. The residue at position 295 (Ser295) is a Phosphoserine. 6 consecutive transmembrane segments (helical) span residues 309 to 329, 348 to 368, 377 to 397, 407 to 427, 443 to 463, and 468 to 488; these read FMLC…AGYQ, GNFL…STFL, IMLY…VLDA, FVLY…LVSL, VVQV…GAIF, and VGFI…LLYL.

Its subcellular location is the membrane. This is an uncharacterized protein from Schizosaccharomyces pombe (strain 972 / ATCC 24843) (Fission yeast).